Reading from the N-terminus, the 234-residue chain is Adenylate dimethylallyltransferase (234 aa).

This sequence belongs to the isopentenyl transferase family.

It carries out the reaction dimethylallyl diphosphate + AMP = N(6)-(dimethylallyl)adenosine 5'-phosphate + diphosphate. Functionally, transfers dimethylallyl groups to AMP as part of the biosynthesis of cytokinin phytohormones. The polypeptide is Adenylate dimethylallyltransferase (ptz) (Pseudomonas savastanoi (Pseudomonas syringae pv. savastanoi)).